A 277-amino-acid chain; its full sequence is Eukaryotic translation initiation factor 3 subunit J (277 aa).

The segment at 1-80 (MSWDDEDFAV…PAATKNTMLD (80 aa)) is disordered. Over residues 23 to 43 (WDDEFAENDDEPVLESWEDEE) the composition is skewed to acidic residues. Low complexity predominate over residues 50-75 (KAAAAAAAKAPKKASPSPAATPAATK). A coiled-coil region spans residues 199-230 (TVENIRQTIATLNVLMKDKEREERQARLAKVK). The disordered stretch occupies residues 257–277 (DNDFDLGGNDNFDDFGEDDFM). Acidic residues predominate over residues 267 to 277 (NFDDFGEDDFM).

It belongs to the eIF-3 subunit J family. In terms of assembly, component of the eukaryotic translation initiation factor 3 (eIF-3) complex.

The protein resides in the cytoplasm. Its function is as follows. Component of the eukaryotic translation initiation factor 3 (eIF-3) complex, which is involved in protein synthesis of a specialized repertoire of mRNAs and, together with other initiation factors, stimulates binding of mRNA and methionyl-tRNAi to the 40S ribosome. The eIF-3 complex specifically targets and initiates translation of a subset of mRNAs involved in cell proliferation. The protein is Eukaryotic translation initiation factor 3 subunit J of Kluyveromyces lactis (strain ATCC 8585 / CBS 2359 / DSM 70799 / NBRC 1267 / NRRL Y-1140 / WM37) (Yeast).